A 516-amino-acid polypeptide reads, in one-letter code: Importin subunit alpha-B (516 aa).

Residues 1–29 show a composition bias toward basic and acidic residues; the sequence is MQRSKQETRKSQYKKSIDSDESRRKREEA. The segment at 1–54 is disordered; it reads MQRSKQETRKSQYKKSIDSDESRRKREEASLSIRKNKREESLLKKRTQAVPGST. The region spanning 1 to 55 is the IBB domain; that stretch reads MQRSKQETRKSQYKKSIDSDESRRKREEASLSIRKNKREESLLKKRTQAVPGSTP. ARM repeat units lie at residues 55-96, 100-140, 143-182, 185-227, 229-268, 271-310, 313-352, 355-394, and 398-437; these read PVKV…KLLS, SPPI…NIAS, PEQTRVVIENGAIQVFVLLLSSPHDDVREQAVWALGNIAG, HYCR…NFCR, KPQPPFEIVRASLPVLAKLIYYQDEEVLIDACWALSYLSD, NERIQEVIDAKVCRKMVELLGHPTIAVQTPALRTIGNIVT, DNQTQIVLSVQALSHLLNLLQSPKRAIRKEACWTISNITA, KNQIQQVIDANIIPSLVYLLANAEFEIQKEAAWAISNATS, and PQQIHFLVSQGCVKPLCDLLKVSDPRIINVALEGIENILV. The tract at residues 490-516 is disordered; that stretch reads EQEDEGDLMPEGSSFSFSNQTNSNFNL. Residues 502–516 are compositionally biased toward low complexity; sequence SSFSFSNQTNSNFNL.

The protein belongs to the importin alpha family. In terms of assembly, forms a complex with tnpo/importin subunit beta.

The protein localises to the cytoplasm. Its subcellular location is the nucleus envelope. In terms of biological role, functions in nuclear protein import via a substrate-importin alpha-beta transport complex that passes though the nuclear pore complexes (NPC). Binds specifically and directly to substrates containing either a simple or bipartite NLS motif. The protein is Importin subunit alpha-B of Dictyostelium discoideum (Social amoeba).